The following is a 495-amino-acid chain: Neuronal acetylcholine receptor subunit beta-4 (495 aa).

Positions 1-20 are cleaved as a signal peptide; sequence MRGTPLLLVSLFALLQPGDC. The Extracellular segment spans residues 21–235; that stretch reads RLANAEEKLM…IIKRKPLFYT (215 aa). N-linked (GlcNAc...) asparagine glycans are attached at residues N35, N92, N137, and N165. An intrachain disulfide couples C152 to C166. A helical transmembrane segment spans residues 236-256; sequence INLIIPCVLITSLAILVFYLP. The Cytoplasmic segment spans residues 257–264; sequence SDCGEKMT. E261 lines the Na(+) pocket. Residues 265–285 traverse the membrane as a helical segment; sequence LCISVLLALTFFLLLISKIVP. The Extracellular portion of the chain corresponds to 286–297; sequence PTSLDIPLIGKY. The helical transmembrane segment at 298–318 threads the bilayer; it reads LLFTMVLVTFSIVTTVCVLNV. The Cytoplasmic segment spans residues 319-463; it reads HHRSPSTHTM…WKFVAMVVDR (145 aa). The helical transmembrane segment at 464-484 threads the bilayer; it reads LFLWVFVIVCILGTMGLFLPP. Over 485–495 the chain is Extracellular; the sequence is LFQIHAPSKGL.

This sequence belongs to the ligand-gated ion channel (TC 1.A.9) family. Acetylcholine receptor (TC 1.A.9.1) subfamily. Beta-4/CHRNB4 sub-subfamily. As to quaternary structure, neuronal AChR is composed of two different types of subunits: alpha and beta. CHRNB4/Beta-4 subunit can be combined to CHRNA2/alpha-2, CHRNA3/alpha-3 or CHRNA4/alpha-4, CHRNA5/alpha-5 and CHRNB3/beta-3 to give rise to functional receptors. Forms stoichiometries such as (CHRNA3)2:(CHRNB4)3 or (CHRNA3:CHRNB4)2:CHRNB3. Interacts with RIC3; which is required for proper folding and assembly. Interacts with LYPD6. As to expression, predominantly expressed by immature T-cells in the thymus.

It localises to the synaptic cell membrane. It is found in the cell membrane. The catalysed reaction is K(+)(in) = K(+)(out). It carries out the reaction Na(+)(in) = Na(+)(out). It catalyses the reaction Ca(2+)(in) = Ca(2+)(out). Activated by a myriad of ligands such as acetylcholine, cytisine, nicotine, choline and epibatidine. The heteropentamer CHRNA3:CHRNB4 activity is blocked by the alpha-conotoxin ImI and AuIB. Component of neuronal acetylcholine receptors (nAChRs) that function as pentameric, ligand-gated cation channels with high calcium permeability among other activities. nAChRs are excitatory neurotrasnmitter receptors formed by a collection of nAChR subunits known to mediate synaptic transmission in the nervous system and the neuromuscular junction. Each nAchR subunit confers differential attributes to channel properties, including activation, deactivation and desensitization kinetics, pH sensitivity, cation permeability, and binding to allosteric modulators. CHRNB4 forms heteropentameric neuronal acetylcholine receptors with CHRNA2, CHRNA3 and CHRNA4, as well as CHRNA5 and CHRNB3 as accesory subunits. CHRNA3:CHRNB4 being predominant in neurons of the autonomic ganglia, it is known as ganglionic nicotinic receptor. CHRNA3:CHRNB4 or CHRNA3:CHRNA5:CHRNB4 play also an important role in the habenulo-interpeduncular tract, modulating the mesolimbic dopamine system and affecting reward circuits and addiction. Hypothalamic CHRNA3:CHRNB4 nAChR activation by nicotine leads to activation of POMC neurons and a decrease in food intake. The chain is Neuronal acetylcholine receptor subunit beta-4 (Chrnb4) from Mus musculus (Mouse).